Consider the following 241-residue polypeptide: Carboxy-S-adenosyl-L-methionine synthase (241 aa).

S-adenosyl-L-methionine-binding positions include Tyr-38, 63–65, 88–89, 116–117, Asn-131, and Arg-198; these read GCS, DN, and DI.

This sequence belongs to the class I-like SAM-binding methyltransferase superfamily. Cx-SAM synthase family. In terms of assembly, homodimer.

It catalyses the reaction prephenate + S-adenosyl-L-methionine = carboxy-S-adenosyl-L-methionine + 3-phenylpyruvate + H2O. Its function is as follows. Catalyzes the conversion of S-adenosyl-L-methionine (SAM) to carboxy-S-adenosyl-L-methionine (Cx-SAM). The polypeptide is Carboxy-S-adenosyl-L-methionine synthase (Histophilus somni (strain 129Pt) (Haemophilus somnus)).